Reading from the N-terminus, the 473-residue chain is H(+)/Cl(-) exchange transporter ClcA (473 aa).

Residues 1–32 lie on the Cytoplasmic side of the membrane; it reads MKTDNSTFLAQQIVRLRRRDQIRRLMQRDKTP. Residues 33 to 69 form a helical membrane-spanning segment; that stretch reads LAILFMAAVVGTLTGLVGVAFEKAVSWVQNMRIGALV. Topologically, residues 70 to 76 are periplasmic; sequence QVADHAF. The chain crosses the membrane as a helical span at residues 77–100; that stretch reads LLWPLAFILSALLAMVGYFLVRKF. Positions 106 to 110 match the Selectivity filter part_1 motif; it reads GSGIP. Chloride is bound at residue serine 107. An intramembrane region (helical) is located at residues 109-116; that stretch reads IPEIEGAL. The Cytoplasmic segment spans residues 117–123; the sequence is EELRPVR. 2 helical membrane passes run 124–141 and 148–166; these read WWRV…TLGA and EGPT…LDVF. Residues 146–150 carry the Selectivity filter part_2 motif; the sequence is GREGP. Residues 167–176 lie on the Cytoplasmic side of the membrane; the sequence is RMRSAEARHT. 2 consecutive intramembrane regions (helical) follow at residues 177–189 and 193–201; these read LLAT…LSAA and PLAGILFII. The Cytoplasmic portion of the chain corresponds to 202–214; the sequence is EEMRPQFRYNLIS. A helical transmembrane segment spans residues 215 to 232; that stretch reads IKAVFTGVIMSSIVFRIF. The Periplasmic portion of the chain corresponds to 233-252; that stretch reads NGEAPIIEVGKLSDAPVNTL. The chain crosses the membrane as a helical span at residues 253–281; sequence WLYLILGIIFGCVGPVFNSLVLRTQDMFQ. Residues 282 to 287 lie on the Cytoplasmic side of the membrane; the sequence is RFHGGE. Residues 288–309 traverse the membrane as a helical segment; the sequence is IKKWVLMGGAIGGLCGILGLIE. At 310–329 the chain is on the periplasmic side; the sequence is PEAAGGGFNLIPIAAAGNFS. The next 2 membrane-spanning stretches (helical) occupy residues 330-349 and 355-376; these read VGLL…LCFS and GIFA…MAAA. Positions 355–359 match the Selectivity filter part_3 motif; that stretch reads GIFAP. Isoleucine 356 and phenylalanine 357 together coordinate chloride. Topologically, residues 377 to 386 are periplasmic; that stretch reads VLFPQYHLEA. The segment at residues 387-401 is an intramembrane region (helical); the sequence is GTFAIAGMGALMAAS. The segment at residues 402–404 is an intramembrane region (note=Loop between two helices); sequence VRA. Residues 405–416 constitute an intramembrane region (helical); the sequence is PLTGIVLVLEMT. Residues 417 to 421 constitute an intramembrane region (note=Loop between two helices); it reads DNYQL. A helical transmembrane segment spans residues 422–438; that stretch reads ILPMIITCLGATLLAQF. The Cytoplasmic segment spans residues 439 to 473; sequence LGGKPLYSTILARTLAKQDAEQAAKNQNAPAGENT. Position 445 (tyrosine 445) interacts with chloride.

This sequence belongs to the chloride channel (TC 2.A.49) family. ClcA subfamily. Homodimer.

The protein resides in the cell inner membrane. It carries out the reaction 2 chloride(in) + H(+)(out) = 2 chloride(out) + H(+)(in). Its function is as follows. Proton-coupled chloride transporter. Functions as antiport system and exchanges two chloride ions for 1 proton. Probably acts as an electrical shunt for an outwardly-directed proton pump that is linked to amino acid decarboxylation, as part of the extreme acid resistance (XAR) response. The chain is H(+)/Cl(-) exchange transporter ClcA from Salmonella schwarzengrund (strain CVM19633).